The following is a 490-amino-acid chain: WD repeat-containing protein JIP5 (490 aa).

WD repeat units lie at residues 23–64, 70–112, 118–155, 157–196, 242–284, 286–327, and 340–377; these read KYND…ERMQ, QKKK…GSCR, PIESSVGKHLFTVGKDHVVKKANTETGKVLTKTDISKD, SSKDAVTKLCHSTTHPFLLSGTENGHVLVYDSNDLSNKFK, DQED…LMDQ, SRIK…HRVN, and GTADEVGFLDIDYEYRLLTAGMDSMKLWSAEGDDEEEE. Positions 368–490 are disordered; the sequence is SAEGDDEEEE…SHGIRRFDGL (123 aa). 2 stretches are compositionally biased toward acidic residues: residues 370–406 and 413–437; these read EGDDEEEEESEGEESEESEESDEESDESSGEESEGDD and EESDSNDEDEVESSDDEKEKEEEST. A compositionally biased stretch (basic and acidic residues) spans 438-448; it reads ETDHKNIEAES. Over residues 450 to 461 the composition is skewed to polar residues; it reads KQANKRQASQPK. The segment covering 469-484 has biased composition (basic residues); sequence KQKLKQTSKLAHSHGI.

This sequence belongs to the WD repeat WDR55 family.

It localises to the nucleus. The protein resides in the nucleolus. The chain is WD repeat-containing protein JIP5 (JIP5) from Meyerozyma guilliermondii (strain ATCC 6260 / CBS 566 / DSM 6381 / JCM 1539 / NBRC 10279 / NRRL Y-324) (Yeast).